Reading from the N-terminus, the 498-residue chain is Isoflavone 2'-hydroxylase (498 aa).

Residues Ile3 to Leu23 traverse the membrane as a helical segment. Cys436 contributes to the heme binding site.

Belongs to the cytochrome P450 family. Heme is required as a cofactor. As to expression, expressed constitutively in roots, but present at very low levels in uninfected stems and leaves.

The protein resides in the endoplasmic reticulum membrane. The catalysed reaction is formononetin + reduced [NADPH--hemoprotein reductase] + O2 = 2'-hydroxyformononetin + oxidized [NADPH--hemoprotein reductase] + H2O + H(+). Functionally, involved in the biosynthesis of the pterocarpin phytoalexins. Acts on isoflavones with a 4'-methoxy group on the B-ring, such as formononetin and biochanin A, and on pseudobaptigenin. Has a low activity with daidzein and genistein and no activity with the 7-O-methylated isoflavonoids isoformononetin and prunetin. This Medicago truncatula (Barrel medic) protein is Isoflavone 2'-hydroxylase.